We begin with the raw amino-acid sequence, 625 residues long: Thioredoxin domain-containing protein 6 (625 aa).

An NDK region spans residues 158–302; the sequence is KSYTVAIIKP…FFFPNFKISN (145 aa). The segment at 594–625 is disordered; sequence GETPETSASDISRNAAAQGDDPEQDESKEMEE. Residues 613–625 show a composition bias toward acidic residues; it reads DDPEQDESKEMEE.

Belongs to the NDK family. As to quaternary structure, monomer and homodimer.

The protein localises to the cytoplasm. The protein resides in the cytoskeleton. It localises to the cilium axoneme. It is found in the dynein axonemal particle. May be a regulator of microtubule physiology. In Xenopus laevis (African clawed frog), this protein is Thioredoxin domain-containing protein 6.